Here is a 414-residue protein sequence, read N- to C-terminus: 3-phosphoshikimate 1-carboxyvinyltransferase (414 aa).

Residues lysine 20, serine 21, and arginine 25 each contribute to the 3-phosphoshikimate site. Phosphoenolpyruvate is bound at residue lysine 20. Phosphoenolpyruvate is bound by residues glycine 85 and arginine 113. 3-phosphoshikimate contacts are provided by serine 154, serine 155, glutamine 156, serine 181, aspartate 296, and lysine 323. Glutamine 156 is a binding site for phosphoenolpyruvate. The active-site Proton acceptor is aspartate 296. Residues arginine 327, arginine 371, and lysine 395 each contribute to the phosphoenolpyruvate site.

The protein belongs to the EPSP synthase family. In terms of assembly, monomer.

The protein localises to the cytoplasm. The catalysed reaction is 3-phosphoshikimate + phosphoenolpyruvate = 5-O-(1-carboxyvinyl)-3-phosphoshikimate + phosphate. It functions in the pathway metabolic intermediate biosynthesis; chorismate biosynthesis. Catalyzes the transfer of the enolpyruvyl moiety of phosphoenolpyruvate (PEP) to the 5-hydroxyl of shikimate-3-phosphate (S3P) to produce enolpyruvyl shikimate-3-phosphate and inorganic phosphate. The protein is 3-phosphoshikimate 1-carboxyvinyltransferase of Saccharolobus islandicus (strain Y.G.57.14 / Yellowstone #1) (Sulfolobus islandicus).